Consider the following 136-residue polypeptide: Protein NrdI (136 aa).

The protein belongs to the NrdI family.

Functionally, probably involved in ribonucleotide reductase function. The sequence is that of Protein NrdI from Shigella dysenteriae serotype 1 (strain Sd197).